The chain runs to 356 residues: Tyrosine recombinase XerS (356 aa).

The Core-binding (CB) domain occupies 16 to 121 (LMPWYVLEYY…ALSSLYKYLT (106 aa)). The region spanning 169 to 354 (EFLEYVDCEY…VNDEQKNALD (186 aa)) is the Tyr recombinase domain. Catalysis depends on residues R210, K234, H306, R309, and H332. The active-site O-(3'-phospho-DNA)-tyrosine intermediate is Y341.

This sequence belongs to the 'phage' integrase family. XerS subfamily.

The protein localises to the cytoplasm. With respect to regulation, ftsK is required for recombination. Functionally, site-specific tyrosine recombinase, which acts by catalyzing the cutting and rejoining of the recombining DNA molecules. Essential to convert dimers of the bacterial chromosome into monomers to permit their segregation at cell division. This chain is Tyrosine recombinase XerS, found in Streptococcus mutans serotype c (strain ATCC 700610 / UA159).